The sequence spans 281 residues: CCAAT/enhancer-binding protein epsilon (281 aa).

The tract at residues 1–30 (MSHGTYYECEPRGGQQPLEFSGGRAGPGEL) is disordered. Lysine 121 is covalently cross-linked (Glycyl lysine isopeptide (Lys-Gly) (interchain with G-Cter in SUMO2)). Residue serine 181 is modified to Phosphoserine. A bZIP domain is found at 204 to 267 (SLEYRLRRER…DTLRNLFRQI (64 aa)). The interval 208–245 (RLRRERNNIAVRKSRDKAKRRIMETQQKVLEYMAENER) is basic motif. Residues 246–267 (LRSRVDQLTQELDTLRNLFRQI) are leucine-zipper.

Belongs to the bZIP family. C/EBP subfamily. As to quaternary structure, binds DNA as a homodimer and as a heterodimer. Can form stable heterodimers with CEBPA, CEBPB and CEBPD. Interacts with GATA1 and SPI1. Interacts with SMARCD2.

Its subcellular location is the nucleus. Its function is as follows. Transcriptional activator. C/EBP are DNA-binding proteins that recognize two different motifs: the CCAAT homology common to many promoters and the enhanced core homology common to many enhancers. Required for the promyelocyte-myelocyte transition in myeloid differentiation. The protein is CCAAT/enhancer-binding protein epsilon (Cebpe) of Rattus norvegicus (Rat).